We begin with the raw amino-acid sequence, 80 residues long: Translation initiation factor IF-1, chloroplastic (80 aa).

The S1-like domain occupies 1–74 (MKEQKWIHEG…TRGRIIYRLR (74 aa)).

Belongs to the IF-1 family. In terms of assembly, component of the 30S ribosomal translation pre-initiation complex which assembles on the 30S ribosome in the order IF-2 and IF-3, IF-1 and N-formylmethionyl-tRNA(fMet); mRNA recruitment can occur at any time during PIC assembly.

The protein localises to the plastid. The protein resides in the chloroplast. In terms of biological role, one of the essential components for the initiation of protein synthesis. Stabilizes the binding of IF-2 and IF-3 on the 30S subunit to which N-formylmethionyl-tRNA(fMet) subsequently binds. Helps modulate mRNA selection, yielding the 30S pre-initiation complex (PIC). Upon addition of the 50S ribosomal subunit IF-1, IF-2 and IF-3 are released leaving the mature 70S translation initiation complex. This chain is Translation initiation factor IF-1, chloroplastic, found in Illicium parviflorum (Yellow anise tree).